Reading from the N-terminus, the 471-residue chain is Putative multidrug resistance protein MdtD (471 aa).

The Periplasmic portion of the chain corresponds to 1–11 (MTDLPDSTRWQ). A helical transmembrane segment spans residues 12-32 (LWIVAFGFFMQSLDTTIVNTA). Topologically, residues 33 to 48 (LPSMAQSLGESPLHMH) are cytoplasmic. Residues 49 to 69 (MVIVSYVLTVAVMLPASGWLA) form a helical membrane-spanning segment. Residues 70 to 76 (DKVGVRN) lie on the Periplasmic side of the membrane. The helical transmembrane segment at 77-97 (IFFTAIVLFTLGSLFCALSGT) threads the bilayer. The Cytoplasmic portion of the chain corresponds to 98-101 (LNEL). A helical membrane pass occupies residues 102–124 (LLARALQGVGGAMMVPVGRLTVM). Residues 125–137 (KIVPREQYMAAMT) lie on the Periplasmic side of the membrane. Residues 138–158 (FVTLPGQVGPLLGPALGGLLV) traverse the membrane as a helical segment. The Cytoplasmic segment spans residues 159–164 (EYASWH). The chain crosses the membrane as a helical span at residues 165-185 (WIFLINIPVGIIGAIATLMLM). The Periplasmic portion of the chain corresponds to 186–196 (PNYTMQTRRFD). The helical transmembrane segment at 197 to 217 (LSGFLLLAVGMAVLTLALDGS) threads the bilayer. Topologically, residues 218–224 (KGTGLSP) are cytoplasmic. Residues 225-245 (LAIAGLVAVGVVALVLYLLHA) traverse the membrane as a helical segment. Over 246–262 (RNNNRALFSLKLFRTRT) the chain is Periplasmic. Residues 263–283 (FSLGLAGSFAGRIGSGMLPFM) traverse the membrane as a helical segment. Residues 284 to 285 (TP) lie on the Cytoplasmic side of the membrane. Residues 286–306 (VFLQIGLGFSPFHAGLMMIPM) form a helical membrane-spanning segment. At 307-341 (VLGSMGMKRIVVQVVNRFGYRRVLVATTLGLSLVT) the chain is on the periplasmic side. Residues 342–362 (MLFMTTALLGWYYVLPFVLFL) form a helical membrane-spanning segment. The Cytoplasmic portion of the chain corresponds to 363–395 (QGMVNSTRFSSMNTLTLKDLPDNLASSGNSLLS). A helical membrane pass occupies residues 396–416 (MIMQLSMSIGVTIAGLLLGLF). Topologically, residues 417-430 (GSQHVSVDSGTTQT) are periplasmic. A helical transmembrane segment spans residues 431–451 (VFMYTWLSMAFIIALPAFIFA). Residues 452 to 471 (RVPNDTHQNVAISRRKRSAQ) are Cytoplasmic-facing.

The protein belongs to the major facilitator superfamily. TCR/Tet family.

The protein localises to the cell inner membrane. This is Putative multidrug resistance protein MdtD from Escherichia coli O7:K1 (strain IAI39 / ExPEC).